We begin with the raw amino-acid sequence, 74 residues long: Large ribosomal subunit protein uL30 (74 aa).

The protein belongs to the universal ribosomal protein uL30 family. As to quaternary structure, part of the 50S ribosomal subunit.

In Koribacter versatilis (strain Ellin345), this protein is Large ribosomal subunit protein uL30.